A 298-amino-acid polypeptide reads, in one-letter code: Putative S-adenosyl-L-methionine-dependent methyltransferase MAV_0778 (298 aa).

S-adenosyl-L-methionine contacts are provided by residues aspartate 124 and 153–154 (DL).

The protein belongs to the UPF0677 family.

Functionally, exhibits S-adenosyl-L-methionine-dependent methyltransferase activity. This chain is Putative S-adenosyl-L-methionine-dependent methyltransferase MAV_0778, found in Mycobacterium avium (strain 104).